We begin with the raw amino-acid sequence, 195 residues long: Exosome complex component CSL4 (195 aa).

2 positions are modified to phosphoserine: Ser-21 and Ser-98. The region spanning 66–147 is the S1 motif domain; that stretch reads DVGAIVTCKV…AQSNYLLTTA (82 aa).

Belongs to the CSL4 family. Component of the RNA exosome core complex (Exo-9), composed of EXOSC1, EXOSC2, EXOSC3, EXOSC4, EXOSC5, EXOSC6, EXOSC7, EXOSC8 and EXOSC9; within the complex interacts with EXOSC6. The catalytically inactive RNA exosome core complex (Exo-9) associates with the catalytic subunit EXOSC10/RRP6. Exo-9 may associate with DIS3 to form the nucleolar exosome complex, or DIS3L to form the cytoplasmic exosome complex. Exo-9 is formed by a hexameric base ring consisting of the heterodimers EXOSC4-EXOSC9, EXOSC5-EXOSC8 and EXOSC6-EXOSC7, and a cap ring consisting of EXOSC1, EXOSC2 and EXOSC3. The RNA exosome complex associates with cofactors C1D/RRP47, MPHOSPH6/MPP6 and MTREX/MTR4. Interacts with DDX60.

It is found in the nucleus. The protein localises to the nucleolus. It localises to the cytoplasm. Its function is as follows. Non-catalytic component of the RNA exosome complex which has 3'-&gt;5' exoribonuclease activity and participates in a multitude of cellular RNA processing and degradation events. In the nucleus, the RNA exosome complex is involved in proper maturation of stable RNA species such as rRNA, snRNA and snoRNA, in the elimination of RNA processing by-products and non-coding 'pervasive' transcripts, such as antisense RNA species and promoter-upstream transcripts (PROMPTs), and of mRNAs with processing defects, thereby limiting or excluding their export to the cytoplasm. The RNA exosome may be involved in Ig class switch recombination (CSR) and/or Ig variable region somatic hypermutation (SHM) by targeting AICDA deamination activity to transcribed dsDNA substrates. In the cytoplasm, the RNA exosome complex is involved in general mRNA turnover and specifically degrades inherently unstable mRNAs containing AU-rich elements (AREs) within their 3' untranslated regions, and in RNA surveillance pathways, preventing translation of aberrant mRNAs. It seems to be involved in degradation of histone mRNA. The catalytic inactive RNA exosome core complex of 9 subunits (Exo-9) is proposed to play a pivotal role in the binding and presentation of RNA for ribonucleolysis, and to serve as a scaffold for the association with catalytic subunits and accessory proteins or complexes. EXOSC1 as peripheral part of the Exo-9 complex stabilizes the hexameric ring of RNase PH-domain subunits through contacts with EXOSC6 and EXOSC8. The protein is Exosome complex component CSL4 (EXOSC1) of Homo sapiens (Human).